A 596-amino-acid chain; its full sequence is Ran GTPase-activating protein (596 aa).

LRR repeat units lie at residues 44-71, 107-134, 137-164, 203-230, 231-258, and 259-286; these read QTTV…GLKR, GAKL…LLRS, CYSL…ALID, LKTF…SFKH, NPHL…ALPF, and LPLL…ALER. The interval 355–418 is disordered; it reads HQEEEDLEDE…EYSNVAEETA (64 aa). Over residues 387 to 410 the composition is skewed to acidic residues; that stretch reads TTEEADEDSEGDEDDEEDEGDEEY. 2 positions are modified to phosphothreonine: threonine 433 and threonine 434. A Phosphoserine modification is found at serine 436.

This sequence belongs to the RNA1 family. In terms of assembly, forms a complex with Nup358/RanBP2, sbr/Nxf1 and Nxt1. Associates with the nuclear pore complex via its interaction with Nup358/RanBP2. In terms of tissue distribution, both full-length and truncated protein are expressed in testis (at protein level). Expressed in oocytes and nurse cells (at protein level).

It is found in the cytoplasm. It localises to the nucleus membrane. In terms of biological role, GTPase activator for the nuclear Ras-related regulatory protein Ran, converting it to the putatively inactive GDP-bound state. Trans-acting factor necessary for meiotic distortion. Distortion is only seen in individuals that carry the RanGAP tandem duplication and express a RanGAP truncated protein. Binding of truncated RanGAP product to the Responder(RSP) locus initiates events that lead to sperm dysfunction. During oogenesis, plays a role in the biogenesis of annulate lamellae containing nuclear pore complex components. The protein is Ran GTPase-activating protein (RanGAP) of Drosophila melanogaster (Fruit fly).